Consider the following 346-residue polypeptide: Phosphoribosylformylglycinamidine cyclo-ligase (346 aa).

It belongs to the AIR synthase family.

Its subcellular location is the cytoplasm. It catalyses the reaction 2-formamido-N(1)-(5-O-phospho-beta-D-ribosyl)acetamidine + ATP = 5-amino-1-(5-phospho-beta-D-ribosyl)imidazole + ADP + phosphate + H(+). It functions in the pathway purine metabolism; IMP biosynthesis via de novo pathway; 5-amino-1-(5-phospho-D-ribosyl)imidazole from N(2)-formyl-N(1)-(5-phospho-D-ribosyl)glycinamide: step 2/2. The polypeptide is Phosphoribosylformylglycinamidine cyclo-ligase (Vibrio campbellii (strain ATCC BAA-1116)).